A 461-amino-acid chain; its full sequence is Cysteine--tRNA ligase (461 aa).

Cys-28 is a binding site for Zn(2+). The short motif at 30–40 (ITVYDLCHIGH) is the 'HIGH' region element. Residues Cys-209, His-234, and Glu-238 each contribute to the Zn(2+) site. The short motif at 266-270 (KMSKS) is the 'KMSKS' region element. An ATP-binding site is contributed by Lys-269.

The protein belongs to the class-I aminoacyl-tRNA synthetase family. As to quaternary structure, monomer. Requires Zn(2+) as cofactor.

Its subcellular location is the cytoplasm. The enzyme catalyses tRNA(Cys) + L-cysteine + ATP = L-cysteinyl-tRNA(Cys) + AMP + diphosphate. In Salmonella dublin (strain CT_02021853), this protein is Cysteine--tRNA ligase.